We begin with the raw amino-acid sequence, 283 residues long: Aspartate dehydrogenase domain-containing protein (283 aa).

Ser-20 and Ser-168 each carry phosphoserine.

The protein belongs to the L-aspartate dehydrogenase family.

In Homo sapiens (Human), this protein is Aspartate dehydrogenase domain-containing protein.